We begin with the raw amino-acid sequence, 400 residues long: Endoplasmin (400 aa).

The residue at position 1 (K1) is an N6-succinyllysine. N42 carries N-linked (GlcNAc...) asparagine glycosylation. The residue at position 44 (S44) is a Phosphoserine. Position 76 is an N6-acetyllysine (K76). Residues N78 and N99 are each glycosylated (N-linked (GlcNAc...) asparagine). K230 carries the N6-succinyllysine modification. Positions 346-400 are disordered; sequence IDPEAQVEEEPEEEPEDTTEDTEQDEEEEVDAGTEEEEEEEQETAKESTAEKDEL. The segment covering 350 to 387 has biased composition (acidic residues); the sequence is AQVEEEPEEEPEDTTEDTEQDEEEEVDAGTEEEEEEEQ. Phosphothreonine is present on T379. A compositionally biased stretch (basic and acidic residues) spans 388–400; it reads ETAKESTAEKDEL. Residues 397 to 400 carry the Prevents secretion from ER motif; that stretch reads KDEL.

It belongs to the heat shock protein 90 family. As to quaternary structure, homodimer; disulfide-linked. Component of an EIF2 complex at least composed of CELF1/CUGBP1, CALR, CALR3, EIF2S1, EIF2S2, HSP90B1 and HSPA5. Part of a large chaperone multiprotein complex comprising DNAJB11, HSP90B1, HSPA5, HYOU, PDIA2, PDIA4, PDIA6, PPIB, SDF2L1, UGGT1 and very small amounts of ERP29, but not, or at very low levels, CALR nor CANX. Interacts with AIMP1; regulates its retention in the endoplasmic reticulum. Hyperglycosylated form interacts with OS9; promoting its degradation by the endoplasmic reticulum associated degradation (ERAD). Interacts with CNPY3. This interaction is disrupted in the presence of ATP. Interacts with TLR4 and TLR9, but not with TLR3. Interacts with MZB1 in a calcium-dependent manner. Interacts with METTL23. Interacts with IL1B; the interaction facilitates cargo translocation into the ERGIC. Interacts with EIF2AK3. In terms of processing, phosphorylated by CK2. N-glycosylated cotranslationally at Asn-217 by STT3A-containing OST-A complex: this glycosylation is constitutive. In response to various stress, 5 additional facultative sites (Asn-62, Asn-107, Asn-445, Asn-481 and Asn-502) can be glycosylated post-translationally by STT3B-containing OST-B complex, leading to a hyperglycosylated form that is degraded by the ER-associated degradation (ERAD) pathway. In normal conditions, the OST-A complex together with CCDC134 prevent glycosylation at facultative sites during protein folding, thereby preventing hyperglycosylation. Mechanistically, nascent HSP90B1 is tethered during translation to a specialized CCDC134-containing translocon that forms a microenvironment for its folding, in which STT3A associates with the SRT pseudosubstrate motif, and prevents access to facultative glycosylation sites until folding is completed, rendering its facultative sites inaccessible to the OST-B complex.

It is found in the endoplasmic reticulum lumen. Its subcellular location is the sarcoplasmic reticulum lumen. It localises to the melanosome. The enzyme catalyses ATP + H2O = ADP + phosphate + H(+). Its function is as follows. ATP-dependent chaperone involved in the processing of proteins in the endoplasmic reticulum, regulating their transport. Together with MESD, acts as a modulator of the Wnt pathway by promoting the folding of LRP6, a coreceptor of the canonical Wnt pathway. When associated with CNPY3, required for proper folding of Toll-like receptors. Promotes folding and trafficking of TLR4 to the cell surface. May participate in the unfolding of cytosolic leaderless cargos (lacking the secretion signal sequence) such as the interleukin 1/IL-1 to facilitate their translocation into the ERGIC (endoplasmic reticulum-Golgi intermediate compartment) and secretion; the translocation process is mediated by the cargo receptor TMED10. This chain is Endoplasmin (HSP90B1), found in Mesocricetus auratus (Golden hamster).